We begin with the raw amino-acid sequence, 512 residues long: Reduced folate transporter (512 aa).

Position 1 is an N-acetylmethionine (Met-1). Residues Met-1–Val-29 are Cytoplasmic-facing. A helical transmembrane segment spans residues Phe-30 to Pro-50. Positions 48 and 49 each coordinate folate. Residues Tyr-51–Val-62 lie on the Extracellular side of the membrane. Asn-56 is a glycosylation site (N-linked (GlcNAc...) asparagine). Residues Thr-63 to Thr-85 traverse the membrane as a helical segment. Over Asp-86–Arg-89 the chain is Cytoplasmic. Residues Tyr-90 to Leu-110 traverse the membrane as a helical segment. Over Gly-111–Val-114 the chain is Extracellular. Residues Val-115–Tyr-137 traverse the membrane as a helical segment. Positions 121 and 131 each coordinate folate. Residues Ile-138–Ala-151 lie on the Cytoplasmic side of the membrane. Residues Ser-152–Gly-176 form a helical membrane-spanning segment. Val-162 is a binding site for folate. At Gly-177–Tyr-181 the chain is on the extracellular side. The chain crosses the membrane as a helical span at residues Met-182–Phe-200. Topologically, residues Leu-201–Gln-266 are cytoplasmic. A helical membrane pass occupies residues Leu-267–Trp-292. Tyr-281, Tyr-282, and Tyr-286 together coordinate folate. Residues Lys-293–Asn-300 are Extracellular-facing. Residues Tyr-301 to Val-323 traverse the membrane as a helical segment. At Asn-324–Leu-329 the chain is on the cytoplasmic side. A helical transmembrane segment spans residues Trp-330–Phe-350. Topologically, residues Gln-351–Pro-353 are extracellular. Residues Asp-354–Thr-377 form a helical membrane-spanning segment. Positions 366 and 370 each coordinate folate. Topologically, residues Phe-378–Leu-391 are cytoplasmic. The chain crosses the membrane as a helical span at residues Val-392–Arg-415. Residues Ala-400–Ser-412 are required for substrate-binding. Residues Gly-416–Gln-423 lie on the Extracellular side of the membrane. The helical transmembrane segment at Gln-424 to Leu-448 threads the bilayer. The Cytoplasmic portion of the chain corresponds to Arg-449 to Ala-512. A phosphoserine mark is found at Ser-466, Ser-471, and Ser-476. Residues Asp-479–Ala-512 are disordered. Basic and acidic residues predominate over residues Glu-500–Ala-512.

Belongs to the reduced folate carrier (RFC) transporter (TC 2.A.48) family. In terms of tissue distribution, expressed in liver, heart, brain, spleen, lung and skeletal muscle.

Its subcellular location is the cell membrane. The protein localises to the apical cell membrane. The protein resides in the basolateral cell membrane. The enzyme catalyses 5-amino-1-(5-phospho-beta-D-ribosyl)imidazole-4-carboxamide(in) + (6S)-5-methyl-5,6,7,8-tetrahydrofolate(out) = 5-amino-1-(5-phospho-beta-D-ribosyl)imidazole-4-carboxamide(out) + (6S)-5-methyl-5,6,7,8-tetrahydrofolate(in). Functionally, antiporter that mediates the import of reduced folates, driven by the export of organic anions. Also acts as an importer of immunoreactive cyclic dinucleotides, but with a lower transporter activity. Mechanistically, acts as a secondary active transporter, which exports intracellular organic anions down their concentration gradients to facilitate the uptake of its substrates. Has high affinity for N5-methyltetrahydrofolate, the predominant circulating form of folate. Also mediates the import of antifolate drug methotrexate. 5-amino-4-imidazolecarboxamide riboside (AICAR), when phosphorylated to AICAR monophosphate, can serve as an organic anion for antiporter activity. The protein is Reduced folate transporter of Rattus norvegicus (Rat).